The primary structure comprises 450 residues: Glucose-6-phosphate isomerase (450 aa).

Glutamate 290 serves as the catalytic Proton donor. Catalysis depends on residues histidine 311 and lysine 425.

Belongs to the GPI family.

It is found in the cytoplasm. The enzyme catalyses alpha-D-glucose 6-phosphate = beta-D-fructose 6-phosphate. Its pathway is carbohydrate biosynthesis; gluconeogenesis. It functions in the pathway carbohydrate degradation; glycolysis; D-glyceraldehyde 3-phosphate and glycerone phosphate from D-glucose: step 2/4. Functionally, catalyzes the reversible isomerization of glucose-6-phosphate to fructose-6-phosphate. This Alkaliphilus metalliredigens (strain QYMF) protein is Glucose-6-phosphate isomerase.